A 349-amino-acid polypeptide reads, in one-letter code: DNA replication and repair protein RecF (349 aa).

30–37 is a binding site for ATP; the sequence is GKNGSGKT.

The protein belongs to the RecF family.

The protein resides in the cytoplasm. The RecF protein is involved in DNA metabolism; it is required for DNA replication and normal SOS inducibility. RecF binds preferentially to single-stranded, linear DNA. It also seems to bind ATP. This chain is DNA replication and repair protein RecF, found in Francisella tularensis subsp. novicida (strain U112).